Consider the following 633-residue polypeptide: Chaperone protein DnaK (633 aa).

Thr-198 is subject to Phosphothreonine; by autocatalysis.

Belongs to the heat shock protein 70 family.

Its function is as follows. Acts as a chaperone. This Rhodopseudomonas palustris (strain BisA53) protein is Chaperone protein DnaK.